Reading from the N-terminus, the 163-residue chain is NADPH-dependent 7-cyano-7-deazaguanine reductase (163 aa).

Positions 1–10 (MSKPPRRSPR) are enriched in basic residues. The segment at 1–23 (MSKPPRRSPRKPTPASPELQLGH) is disordered. The active-site Thioimide intermediate is Cys-61. Asp-68 (proton donor) is an active-site residue. Residues 83–85 (LES) and 102–103 (HE) contribute to the substrate site.

This sequence belongs to the GTP cyclohydrolase I family. QueF type 1 subfamily.

The protein resides in the cytoplasm. It carries out the reaction 7-aminomethyl-7-carbaguanine + 2 NADP(+) = 7-cyano-7-deazaguanine + 2 NADPH + 3 H(+). Its pathway is tRNA modification; tRNA-queuosine biosynthesis. Functionally, catalyzes the NADPH-dependent reduction of 7-cyano-7-deazaguanine (preQ0) to 7-aminomethyl-7-deazaguanine (preQ1). This is NADPH-dependent 7-cyano-7-deazaguanine reductase from Rhodopseudomonas palustris (strain BisA53).